The primary structure comprises 118 residues: Nitrogenase-stabilizing/protective protein NifW (118 aa).

The protein belongs to the NifW family. Homotrimer; associates with NifD.

May protect the nitrogenase Fe-Mo protein from oxidative damage. This Rhodopseudomonas palustris (strain BisB5) protein is Nitrogenase-stabilizing/protective protein NifW.